Here is a 542-residue protein sequence, read N- to C-terminus: Sensor protein CitS (542 aa).

Over M1–K13 the chain is Cytoplasmic. The chain crosses the membrane as a helical span at residues I14 to A34. Topologically, residues V35–R175 are extracellular. The helical transmembrane segment at N176–A196 threads the bilayer. The Cytoplasmic portion of the chain corresponds to K197 to G542. The PAS domain maps to R216–L279. A Histidine kinase domain is found at A336–K528. H339 carries the post-translational modification Phosphohistidine; by autocatalysis.

It localises to the cell membrane. The catalysed reaction is ATP + protein L-histidine = ADP + protein N-phospho-L-histidine.. Member of the two-component regulatory system CitT/CitS. Regulates the expression of the citM-yflN operon. Functions probably as a membrane-associated protein kinase that phosphorylates CitT in response to environmental citrate or Mg(2+)-citrate complex. This Bacillus subtilis (strain 168) protein is Sensor protein CitS (citS).